We begin with the raw amino-acid sequence, 375 residues long: Peptidyl-prolyl cis-trans isomerase D (375 aa).

The PPIase cyclophilin-type domain maps to 7–169; it reads YFDITIANEP…QAVTISSAGV (163 aa). TPR repeat units lie at residues 217 to 250, 270 to 307, and 312 to 345; these read AGKL…LDVH, LPLL…PNLS, and GKAL…VPGD.

The protein belongs to the cyclophilin-type PPIase family. PPIase D subfamily.

The protein localises to the cytoplasm. It carries out the reaction [protein]-peptidylproline (omega=180) = [protein]-peptidylproline (omega=0). Functionally, PPIases accelerate the folding of proteins. It catalyzes the cis-trans isomerization of proline imidic peptide bonds in oligopeptides. In Cryptococcus neoformans var. neoformans serotype D (strain JEC21 / ATCC MYA-565) (Filobasidiella neoformans), this protein is Peptidyl-prolyl cis-trans isomerase D (CPR6).